We begin with the raw amino-acid sequence, 290 residues long: 4-hydroxybenzoate octaprenyltransferase (290 aa).

8 helical membrane passes run 23-43 (IGAL…TPGM), 46-66 (LWIL…GCVV), 99-119 (LFVV…AMTI), 141-161 (LPQV…FAAV), 163-183 (ESLP…AVAY), 212-232 (TLII…IGWL), 233-253 (NGLG…FVYQ), and 268-288 (AFMN…MSYW).

This sequence belongs to the UbiA prenyltransferase family. It depends on Mg(2+) as a cofactor.

The protein resides in the cell inner membrane. The catalysed reaction is all-trans-octaprenyl diphosphate + 4-hydroxybenzoate = 4-hydroxy-3-(all-trans-octaprenyl)benzoate + diphosphate. Its pathway is cofactor biosynthesis; ubiquinone biosynthesis. Its function is as follows. Catalyzes the prenylation of para-hydroxybenzoate (PHB) with an all-trans polyprenyl group. Mediates the second step in the final reaction sequence of ubiquinone-8 (UQ-8) biosynthesis, which is the condensation of the polyisoprenoid side chain with PHB, generating the first membrane-bound Q intermediate 3-octaprenyl-4-hydroxybenzoate. In Salmonella typhi, this protein is 4-hydroxybenzoate octaprenyltransferase.